The following is a 345-amino-acid chain: Tropomodulin-4 (345 aa).

Disordered stretches follow at residues 40 to 64 (PENMLLPAGLRQRDQTKKSPTGPLD) and 326 to 345 (ARAAHAMTRNNELRRQQKKR). Positions 336 to 345 (NELRRQQKKR) are enriched in basic and acidic residues.

Belongs to the tropomodulin family. As to quaternary structure, binds to the N-terminus of tropomyosin and to actin.

The protein localises to the cytoplasm. The protein resides in the cytoskeleton. In terms of biological role, blocks the elongation and depolymerization of the actin filaments at the pointed end. The Tmod/TM complex contributes to the formation of the short actin protofilament, which in turn defines the geometry of the membrane skeleton. The polypeptide is Tropomodulin-4 (Tmod4) (Mus musculus (Mouse)).